A 66-amino-acid polypeptide reads, in one-letter code: Large ribosomal subunit protein bL35 (66 aa).

The segment covering 1–16 (MPKMKTHRGAAKRVKR) has biased composition (basic residues). The segment at 1-28 (MPKMKTHRGAAKRVKRTGSGQLKRSRAF) is disordered.

The protein belongs to the bacterial ribosomal protein bL35 family.

This Staphylococcus epidermidis (strain ATCC 35984 / DSM 28319 / BCRC 17069 / CCUG 31568 / BM 3577 / RP62A) protein is Large ribosomal subunit protein bL35.